Reading from the N-terminus, the 182-residue chain is ATP synthase subunit delta (182 aa).

It belongs to the ATPase delta chain family. As to quaternary structure, F-type ATPases have 2 components, F(1) - the catalytic core - and F(0) - the membrane proton channel. F(1) has five subunits: alpha(3), beta(3), gamma(1), delta(1), epsilon(1). CF(0) has four main subunits: a(1), b(1), b'(1) and c(10-14). The alpha and beta chains form an alternating ring which encloses part of the gamma chain. F(1) is attached to F(0) by a central stalk formed by the gamma and epsilon chains, while a peripheral stalk is formed by the delta, b and b' chains.

The protein resides in the cellular thylakoid membrane. F(1)F(0) ATP synthase produces ATP from ADP in the presence of a proton or sodium gradient. F-type ATPases consist of two structural domains, F(1) containing the extramembraneous catalytic core and F(0) containing the membrane proton channel, linked together by a central stalk and a peripheral stalk. During catalysis, ATP synthesis in the catalytic domain of F(1) is coupled via a rotary mechanism of the central stalk subunits to proton translocation. Its function is as follows. This protein is part of the stalk that links CF(0) to CF(1). It either transmits conformational changes from CF(0) to CF(1) or is implicated in proton conduction. The protein is ATP synthase subunit delta of Parasynechococcus marenigrum (strain WH8102).